The following is a 785-amino-acid chain: Polyribonucleotide nucleotidyltransferase (785 aa).

Residues D516 and D522 each contribute to the Mg(2+) site. A KH domain is found at P582–I641. Residues G653–V722 form the S1 motif domain. A disordered region spans residues V722–S785. The segment covering A734 to S764 has biased composition (basic and acidic residues).

It belongs to the polyribonucleotide nucleotidyltransferase family. Mg(2+) is required as a cofactor.

The protein resides in the cytoplasm. The catalysed reaction is RNA(n+1) + phosphate = RNA(n) + a ribonucleoside 5'-diphosphate. In terms of biological role, involved in mRNA degradation. Catalyzes the phosphorolysis of single-stranded polyribonucleotides processively in the 3'- to 5'-direction. The protein is Polyribonucleotide nucleotidyltransferase of Salinispora tropica (strain ATCC BAA-916 / DSM 44818 / JCM 13857 / NBRC 105044 / CNB-440).